A 372-amino-acid polypeptide reads, in one-letter code: Serine/threonine-protein kinase 17B (372 aa).

A Protein kinase domain is found at 33–293 (TLTPKELGRG…AESCLSHSWL (261 aa)). ATP contacts are provided by residues 39 to 47 (LGRGKFAVV) and Lys-62. Catalysis depends on Asp-158, which acts as the Proton acceptor. The disordered stretch occupies residues 305-348 (EETSGSSQIQDLTLRSSEEKTSKSSCNGSCGAREDKENIPEDGS). The span at 307 to 319 (TSGSSQIQDLTLR) shows a compositional bias: polar residues.

It belongs to the protein kinase superfamily. CAMK Ser/Thr protein kinase family. DAP kinase subfamily. As to quaternary structure, interacts with CHP1; the interaction induces CHP1 to translocate from the Golgi to the nucleus. In terms of processing, autophosphorylated.

The protein localises to the nucleus. Its subcellular location is the cell membrane. It localises to the endoplasmic reticulum-Golgi intermediate compartment. The catalysed reaction is L-seryl-[protein] + ATP = O-phospho-L-seryl-[protein] + ADP + H(+). It carries out the reaction L-threonyl-[protein] + ATP = O-phospho-L-threonyl-[protein] + ADP + H(+). Acts as a positive regulator of apoptosis. Phosphorylates myosin light chains. The chain is Serine/threonine-protein kinase 17B (Stk17b) from Mus musculus (Mouse).